Here is a 158-residue protein sequence, read N- to C-terminus: Nuclear cap-binding protein subunit 2 (158 aa).

Residues Tyr-17, Tyr-40, 109–113 (RADWD), 120–124 (RQYGR), and 130–131 (QV) contribute to the mRNA site. The region spanning 37 to 115 (CTLYVGNLSY…RVIRADWDAG (79 aa)) is the RRM domain. Residues 123 to 158 (GRGKHGGQVRDEYRKDYDPERGGYNRAIAQKGGDRQ) are disordered. The span at 130 to 145 (QVRDEYRKDYDPERGG) shows a compositional bias: basic and acidic residues.

It belongs to the RRM NCBP2 family. Component of the nuclear cap-binding complex (CBC), a heterodimer composed of ncbp-1 and ncbp-2 that interacts with m7GpppG-capped RNA.

Its subcellular location is the nucleus. Component of the cap-binding complex (CBC), which binds co-transcriptionally to the 5' cap of pre-mRNAs and is involved in various processes such as pre-mRNA splicing and RNA-mediated gene silencing (RNAi). The CBC complex is involved in miRNA-mediated RNA interference and is required for primary microRNAs (miRNAs) processing. In the CBC complex, ncbp-2 recognizes and binds capped RNAs (m7GpppG-capped RNA) but requires ncbp-1 to stabilize the movement of its N-terminal loop and lock the CBC into a high affinity cap-binding state with the cap structure. This chain is Nuclear cap-binding protein subunit 2 (ncbp-2), found in Caenorhabditis elegans.